Consider the following 419-residue polypeptide: DNA ligase (419 aa).

An NTD region spans residues 1–120 (MLSQFPGQCS…ARQKRGAHTN (120 aa)). Residues 121 to 317 (RGMIPPMLVK…NYHSPHLAKL (197 aa)) form an AD domain region. Histidine 149, lysine 151, glutamate 203, and phenylalanine 232 together coordinate ATP. Lysine 151 functions as the N6-AMP-lysine intermediate in the catalytic mechanism. Glutamate 203 provides a ligand contact to a divalent metal cation. Glutamate 291 lines the a divalent metal cation pocket. ATP is bound by residues isoleucine 294 and lysine 316. The segment at 318 to 419 (KPLLDAEFIL…REPINVLEII (102 aa)) is OB domain.

The protein belongs to the ATP-dependent DNA ligase family. Requires a divalent metal cation as cofactor.

The protein resides in the virion. The catalysed reaction is ATP + (deoxyribonucleotide)n-3'-hydroxyl + 5'-phospho-(deoxyribonucleotide)m = (deoxyribonucleotide)n+m + AMP + diphosphate.. Its function is as follows. Very low-fidelity DNA ligase that seals nicks in double-stranded DNA during DNA repair. Together with the viral repair DNA polymerase X, fills the single nucleotide gaps generated by the AP endonuclease. It is not essential for viral replication and recombination. Displays a very low adenylation activity towards DNA with 3'-dideoxy- or 3'-amino-terminated nicks compared to regular nick DNA. The chain is DNA ligase (LIG) from Ornithodoros (relapsing fever ticks).